A 290-amino-acid chain; its full sequence is Malonyl-[acyl-carrier protein] O-methyltransferase (290 aa).

It belongs to the methyltransferase superfamily.

It carries out the reaction malonyl-[ACP] + S-adenosyl-L-methionine = malonyl-[ACP] methyl ester + S-adenosyl-L-homocysteine. Its pathway is cofactor biosynthesis; biotin biosynthesis. Functionally, converts the free carboxyl group of a malonyl-thioester to its methyl ester by transfer of a methyl group from S-adenosyl-L-methionine (SAM). It allows to synthesize pimeloyl-ACP via the fatty acid synthetic pathway. The sequence is that of Malonyl-[acyl-carrier protein] O-methyltransferase from Gallionella capsiferriformans (strain ES-2) (Gallionella ferruginea capsiferriformans (strain ES-2)).